Reading from the N-terminus, the 419-residue chain is E3 ubiquitin-protein ligase pellino homolog 2 (419 aa).

Residues 15 to 202 (EPVKYRELVV…HPQGGFTEES (188 aa)) enclose the FHA; atypical domain.

This sequence belongs to the pellino family. As to quaternary structure, interacts with TRAF6, IRAK4 and MAP3K7. Interacts with IRAK1. Interacts with BCL10; this interaction is impaired by SOCS3. In terms of processing, phosphorylated by IRAK1 and IRAK4 enhancing its E3 ligase activity. In terms of tissue distribution, widely expressed both in embryos and adult. Weakly or not expressed in spleen and thymus.

It carries out the reaction S-ubiquitinyl-[E2 ubiquitin-conjugating enzyme]-L-cysteine + [acceptor protein]-L-lysine = [E2 ubiquitin-conjugating enzyme]-L-cysteine + N(6)-ubiquitinyl-[acceptor protein]-L-lysine.. It participates in protein modification; protein ubiquitination. E3 ubiquitin ligase catalyzing the covalent attachment of ubiquitin moieties onto substrate proteins. Involved in the TLR and IL-1 signaling pathways via interaction with the complex containing IRAK kinases and TRAF6. Mediates IL1B-induced IRAK1 'Lys-63'-linked polyubiquitination and possibly 'Lys-48'-linked ubiquitination. May be important for LPS- and IL1B-induced MAP3K7-dependent, but not MAP3K3-dependent, NF-kappa-B activation. Can activate the MAP (mitogen activated protein) kinase pathway leading to activation of ELK1. The sequence is that of E3 ubiquitin-protein ligase pellino homolog 2 (Peli2) from Mus musculus (Mouse).